The chain runs to 291 residues: Proteasomal ubiquitin receptor ADRM1 homolog rpn1301 (291 aa).

One can recognise a Pru domain in the interval 1 to 114 (MSLITFKAGK…ERINSYIKDQ (114 aa)). Residues 135-162 (TVEQSEPIAQPTESSKESSEIGAPNSDE) form a disordered region. The DEUBAD domain occupies 178-290 (AQAGFGGSTV…ARFVSRNNGS (113 aa)).

This sequence belongs to the ADRM1 family. As to quaternary structure, component of the 19S proteasome regulatory particle complex. The 2 S.pombe rpn13 homologs, rpn1301 and rpn1302 are present at a 0.2-1 ratio.

The protein resides in the cytoplasm. The protein localises to the nucleus. Component of the 26S proteasome, a multiprotein complex involved in the ATP-dependent degradation of ubiquitinated proteins. This complex plays a key role in the maintenance of protein homeostasis by removing misfolded or damaged proteins, which could impair cellular functions, and by removing proteins whose functions are no longer required. Therefore, the proteasome participates in numerous cellular processes, including cell cycle progression, apoptosis, or DNA damage repair. Within the complex, functions as a proteasomal ubiquitin receptor. In Schizosaccharomyces pombe (strain 972 / ATCC 24843) (Fission yeast), this protein is Proteasomal ubiquitin receptor ADRM1 homolog rpn1301 (rpn1301).